Here is a 137-residue protein sequence, read N- to C-terminus: Small ribosomal subunit protein uS12 (137 aa).

A disordered region spans residues 1–43 (MPTINQLVRKGRVSKTKKSDSPALNKGYNSFKKRMTDQNAPQK).

Belongs to the universal ribosomal protein uS12 family. In terms of assembly, part of the 30S ribosomal subunit. Contacts proteins S8 and S17. May interact with IF1 in the 30S initiation complex.

In terms of biological role, with S4 and S5 plays an important role in translational accuracy. Its function is as follows. Interacts with and stabilizes bases of the 16S rRNA that are involved in tRNA selection in the A site and with the mRNA backbone. Located at the interface of the 30S and 50S subunits, it traverses the body of the 30S subunit contacting proteins on the other side and probably holding the rRNA structure together. The combined cluster of proteins S8, S12 and S17 appears to hold together the shoulder and platform of the 30S subunit. This Oceanobacillus iheyensis (strain DSM 14371 / CIP 107618 / JCM 11309 / KCTC 3954 / HTE831) protein is Small ribosomal subunit protein uS12.